Here is a 57-residue protein sequence, read N- to C-terminus: MAVPFRRTSKTAKRKRRTHFKLSVPGMVTCPNCGEAKLSHRVCKACGQYKGKEVVSK.

It belongs to the bacterial ribosomal protein bL32 family.

The sequence is that of Large ribosomal subunit protein bL32 from Lysinibacillus sphaericus (strain C3-41).